Reading from the N-terminus, the 339-residue chain is D-erythrose-4-phosphate dehydrogenase (339 aa).

NAD(+) is bound at residue 12 to 13; sequence RI. Substrate is bound by residues 154-156, arginine 200, 213-214, and arginine 236; these read SCT and TK. Cysteine 155 acts as the Nucleophile in catalysis. Residue asparagine 318 participates in NAD(+) binding.

Belongs to the glyceraldehyde-3-phosphate dehydrogenase family. Epd subfamily. As to quaternary structure, homotetramer.

The protein localises to the cytoplasm. The enzyme catalyses D-erythrose 4-phosphate + NAD(+) + H2O = 4-phospho-D-erythronate + NADH + 2 H(+). Its pathway is cofactor biosynthesis; pyridoxine 5'-phosphate biosynthesis; pyridoxine 5'-phosphate from D-erythrose 4-phosphate: step 1/5. Catalyzes the NAD-dependent conversion of D-erythrose 4-phosphate to 4-phosphoerythronate. The polypeptide is D-erythrose-4-phosphate dehydrogenase (Proteus mirabilis (strain HI4320)).